The chain runs to 92 residues: UPF0250 protein VV0902 (92 aa).

The protein belongs to the UPF0250 family.

This is UPF0250 protein VV0902 from Vibrio vulnificus (strain YJ016).